A 761-amino-acid chain; its full sequence is Translation initiation factor IF-2 (761 aa).

The tract at residues 39 to 179 is disordered; that stretch reads DEETLNKAKQ…KVNHQQMPLP (141 aa). Residues 45–105 are compositionally biased toward low complexity; the sequence is KAKQAGKPAA…NNQQSQSQGQ (61 aa). Residues 106–120 are compositionally biased toward polar residues; the sequence is TKRPSQASNNQSGAA. A compositionally biased stretch (low complexity) spans 142–154; that stretch reads PGSNNRRPGNNQN. Residues 155 to 168 are compositionally biased toward basic residues; the sequence is RRNHGNRGGKRRPQ. Residues 262-435 form the tr-type G domain; that stretch reads ERPPVVTIMG…EVEEFKANPD (174 aa). The tract at residues 271-278 is G1; the sequence is GHVDHGKT. 271–278 contacts GTP; that stretch reads GHVDHGKT. The interval 296-300 is G2; sequence GITQH. The interval 317–320 is G3; sequence DTPG. GTP-binding positions include 317 to 321 and 371 to 374; these read DTPGH and NKID. Residues 371–374 form a G4 region; sequence NKID. A G5 region spans residues 407–409; that stretch reads SAL.

This sequence belongs to the TRAFAC class translation factor GTPase superfamily. Classic translation factor GTPase family. IF-2 subfamily.

The protein resides in the cytoplasm. One of the essential components for the initiation of protein synthesis. Protects formylmethionyl-tRNA from spontaneous hydrolysis and promotes its binding to the 30S ribosomal subunits. Also involved in the hydrolysis of GTP during the formation of the 70S ribosomal complex. In Shouchella clausii (strain KSM-K16) (Alkalihalobacillus clausii), this protein is Translation initiation factor IF-2.